The sequence spans 227 residues: 7-cyano-7-deazaguanine synthase (227 aa).

9-19 (LSGGLDSATVL) provides a ligand contact to ATP. Zn(2+) is bound by residues Cys189, Cys199, Cys202, and Cys205.

This sequence belongs to the QueC family. The cofactor is Zn(2+).

The enzyme catalyses 7-carboxy-7-deazaguanine + NH4(+) + ATP = 7-cyano-7-deazaguanine + ADP + phosphate + H2O + H(+). It functions in the pathway purine metabolism; 7-cyano-7-deazaguanine biosynthesis. Catalyzes the ATP-dependent conversion of 7-carboxy-7-deazaguanine (CDG) to 7-cyano-7-deazaguanine (preQ(0)). The polypeptide is 7-cyano-7-deazaguanine synthase (Cupriavidus metallidurans (strain ATCC 43123 / DSM 2839 / NBRC 102507 / CH34) (Ralstonia metallidurans)).